Reading from the N-terminus, the 686-residue chain is Ovotransferrin (686 aa).

Transferrin-like domains are found at residues 7-333 and 345-670; these read VRWC…SLRK and IQWC…SLNT. Intrachain disulfides connect C10–C45, C20–C36, C115–C197, C160–C174, C171–C182, and C228–C242. The tract at residues 333 to 341 is connecting region; it reads KDQLTVGPR. 9 cysteine pairs are disulfide-bonded: C348–C380, C358–C371, C405–C680, C421–C643, C454–C530, C478–C671, C488–C502, C499–C513, and C570–C584. N473 carries an N-linked (GlcNAc...) asparagine glycan. An N-linked (GlcNAc...) asparagine glycan is attached at N548.

Belongs to the transferrin family. Monomer.

Its subcellular location is the secreted. Functionally, transferrins are iron binding transport proteins which can bind two Fe(3+) ions in association with the binding of an anion, usually bicarbonate. It is responsible for the transport of iron from sites of absorption and heme degradation to those of storage and utilization. Serum transferrin may also have a further role in stimulating cell proliferation. Its function is as follows. Ovotransferrin has a bacteriostatic function. Its concentration in avian egg is the highest concentration of any transferrin in vivo. This Anas platyrhynchos (Mallard) protein is Ovotransferrin.